The primary structure comprises 350 residues: Biotin synthase (350 aa).

In terms of domain architecture, Radical SAM core spans 54–278 (REIQLSTLLS…TMPQSYVRLS (225 aa)). 3 residues coordinate [4Fe-4S] cluster: C69, C73, and C76. [2Fe-2S] cluster contacts are provided by C113, C144, C204, and R276.

It belongs to the radical SAM superfamily. Biotin synthase family. As to quaternary structure, homodimer. [4Fe-4S] cluster serves as cofactor. It depends on [2Fe-2S] cluster as a cofactor.

The enzyme catalyses (4R,5S)-dethiobiotin + (sulfur carrier)-SH + 2 reduced [2Fe-2S]-[ferredoxin] + 2 S-adenosyl-L-methionine = (sulfur carrier)-H + biotin + 2 5'-deoxyadenosine + 2 L-methionine + 2 oxidized [2Fe-2S]-[ferredoxin]. It participates in cofactor biosynthesis; biotin biosynthesis; biotin from 7,8-diaminononanoate: step 2/2. Catalyzes the conversion of dethiobiotin (DTB) to biotin by the insertion of a sulfur atom into dethiobiotin via a radical-based mechanism. This is Biotin synthase from Neisseria meningitidis serogroup C / serotype 2a (strain ATCC 700532 / DSM 15464 / FAM18).